Here is a 406-residue protein sequence, read N- to C-terminus: Cysteine desulfurase (406 aa).

Position 226 is an N6-(pyridoxal phosphate)lysine (K226). Residue C364 is the Cysteine persulfide intermediate of the active site.

It belongs to the class-V pyridoxal-phosphate-dependent aminotransferase family. Csd subfamily. As to quaternary structure, homodimer. Interacts with SufE and the SufBCD complex composed of SufB, SufC and SufD. The interaction with SufE is required to mediate the direct transfer of the sulfur atom from the S-sulfanylcysteine. The cofactor is pyridoxal 5'-phosphate.

The protein localises to the cytoplasm. It catalyses the reaction (sulfur carrier)-H + L-cysteine = (sulfur carrier)-SH + L-alanine. The catalysed reaction is L-selenocysteine + AH2 = hydrogenselenide + L-alanine + A + H(+). Its pathway is cofactor biosynthesis; iron-sulfur cluster biosynthesis. In terms of biological role, cysteine desulfurases mobilize the sulfur from L-cysteine to yield L-alanine, an essential step in sulfur metabolism for biosynthesis of a variety of sulfur-containing biomolecules. Component of the suf operon, which is activated and required under specific conditions such as oxidative stress and iron limitation. Acts as a potent selenocysteine lyase in vitro, that mobilizes selenium from L-selenocysteine. Selenocysteine lyase activity is however unsure in vivo. In Escherichia coli O127:H6 (strain E2348/69 / EPEC), this protein is Cysteine desulfurase.